Reading from the N-terminus, the 182-residue chain is Nucleoid-associated protein At2g24020, chloroplastic (182 aa).

The N-terminal 48 residues, 1–48, are a transit peptide targeting the chloroplast; the sequence is MASMAATTNFTKSMLFPFSHVSGNASLNSQRRTWPKQYKSKNGYRSLR.

The protein belongs to the YbaB/EbfC family. In terms of assembly, homodimer. Interacts with ALB3 and ALB4.

The protein resides in the plastid. Its subcellular location is the chloroplast stroma. Functionally, participates with ALB4 in thylakoid protein targeting. May function with specific subset of thylakoidal proteins. Binds to DNA and alters its conformation. May be involved in regulation of gene expression, nucleoid organization and DNA protection. The polypeptide is Nucleoid-associated protein At2g24020, chloroplastic (Arabidopsis thaliana (Mouse-ear cress)).